We begin with the raw amino-acid sequence, 273 residues long: Proteasome subunit beta type-10 (273 aa).

Met-1 is modified (N-acetylmethionine). The propeptide at 1–39 is removed in mature form; that stretch reads MLKPALEPRGGFSFENCQRNASLERVLPGLKVPHARKTG. Thr-40 (nucleophile) is an active-site residue. The residue at position 230 (Ser-230) is a Phosphoserine.

This sequence belongs to the peptidase T1B family. In terms of assembly, the 26S proteasome consists of a 20S proteasome core and two 19S regulatory subunits. The 20S proteasome core is composed of 28 subunits that are arranged in four stacked rings, resulting in a barrel-shaped structure. The two end rings are each formed by seven alpha subunits, and the two central rings are each formed by seven beta subunits. The catalytic chamber with the active sites is on the inside of the barrel. Component of the immunoproteasome, where it displaces the equivalent housekeeping subunit PSMB7. Component of the spermatoproteasome, a form of the proteasome specifically found in testis. As to quaternary structure, (Microbial infection) Interacts with HIV-1 TAT protein. Post-translationally, autocleaved. The resulting N-terminal Thr residue of the mature subunit is responsible for the nucleophile proteolytic activity.

The protein localises to the cytoplasm. It is found in the nucleus. The enzyme catalyses Cleavage of peptide bonds with very broad specificity.. The proteasome is a multicatalytic proteinase complex which is characterized by its ability to cleave peptides with Arg, Phe, Tyr, Leu, and Glu adjacent to the leaving group at neutral or slightly basic pH. The proteasome has an ATP-dependent proteolytic activity. This subunit is involved in antigen processing to generate class I binding peptides. In Homo sapiens (Human), this protein is Proteasome subunit beta type-10 (PSMB10).